The chain runs to 602 residues: Elongation factor 4 (602 aa).

The tr-type G domain occupies 7 to 189 (NNIRNFSIIA…RILTAVPPPQ (183 aa)). GTP contacts are provided by residues 19–24 (DHGKST) and 136–139 (NKID).

It belongs to the TRAFAC class translation factor GTPase superfamily. Classic translation factor GTPase family. LepA subfamily.

The protein resides in the cell inner membrane. The catalysed reaction is GTP + H2O = GDP + phosphate + H(+). Functionally, required for accurate and efficient protein synthesis under certain stress conditions. May act as a fidelity factor of the translation reaction, by catalyzing a one-codon backward translocation of tRNAs on improperly translocated ribosomes. Back-translocation proceeds from a post-translocation (POST) complex to a pre-translocation (PRE) complex, thus giving elongation factor G a second chance to translocate the tRNAs correctly. Binds to ribosomes in a GTP-dependent manner. In Protochlamydia amoebophila (strain UWE25), this protein is Elongation factor 4.